The following is a 92-amino-acid chain: MKRKNASLLGNVLMGLGLVVMVVGVGYSILNQLPQFNMPQYFAHGAVLSIFVGAILWLAGARVGGHEQVCDRYWWVRHYDKRCRRSDNRRHS.

This is an uncharacterized protein from Escherichia coli O157:H7.